Reading from the N-terminus, the 184-residue chain is MKLSTSLLAIVAVASTFIGNALSATTVPGCFAECIDKAAVAVNCAAGDIDCLQASSQFATIVSECVATSDCTALSPGSASDADSINKTFNILSGLGFIDEADAFSAADVPEERDLTGLGRVLPVEKRQNCPTRRGLCVTSGLTACRNHCRSCHRGDVGCVRCSNAQCTGFLGTTCTCINPCPRC.

The signal sequence occupies residues 1 to 23 (MKLSTSLLAIVAVASTFIGNALS). Positions 24–127 (ATTVPGCFAE…LGRVLPVEKR (104 aa)) are excised as a propeptide. Glutamine 128 carries the pyrrolidone carboxylic acid modification. Disulfide bonds link cysteine 130/cysteine 159, cysteine 137/cysteine 167, cysteine 145/cysteine 175, cysteine 149/cysteine 177, cysteine 152/cysteine 184, and cysteine 162/cysteine 181.

It belongs to the invertebrate defensin family. In terms of processing, contains a unique connectivity of 6 cysteine bonds in contrast to most other CS-alpha-beta defensins which are linked by 3 or 4 disulfide bonds. Disulfide bonds are essential for structural integrity and antibacterial activity, since activity is lost after treatment with reducing agents. Thanks to disulfide bonds and N-terminal pyroglutamate, the protein is extremely stable in a wide pH and temperature range and insensitive toward proteases.

It is found in the secreted. It localises to the target cell membrane. Its function is as follows. Antimicrobial peptide that acts against Gram-positive bacteria (Listeria spp., Enterococcus spp., B.subtilis, B.anthracis, P.aeruginosa). Is not active against Gram-negative bacteria. It selectively inhibits peptidoglycan biosynthesis through complex formation with the cell wall precursor lipid II (1:1 molar ratio), probably anchoring lipid II to the membrane, thus inhibiting cell wall synthesis. The interaction with lipid II involves the third position of the pentapeptide. Shows bactericidal activity at about 2-fold minimal inhibitory concentrations (MIC), but does not form pore across the membrane. The chain is Fungal defensin copsin from Coprinopsis cinerea (Inky cap fungus).